The primary structure comprises 165 residues: Protoporphyrinogen IX oxidase (165 aa).

4 helical membrane passes run 26 to 46 (LHVI…RLFV), 77 to 97 (AMIA…IVDW), 99 to 119 (MLWP…HMWL), and 145 to 165 (PTLL…YWGF). Position 27 (His-27) interacts with heme. Lys-105 is a heme binding site.

It belongs to the HemJ family. As to quaternary structure, homodimer. Requires heme b as cofactor.

The protein localises to the cell membrane. The catalysed reaction is protoporphyrinogen IX + 3 A = protoporphyrin IX + 3 AH2. It functions in the pathway porphyrin-containing compound metabolism; protoporphyrin-IX biosynthesis; protoporphyrin-IX from protoporphyrinogen-IX: step 1/1. Its function is as follows. Catalyzes the oxidation of protoporphyrinogen IX to protoporphyrin IX. Is involved in the biosynthesis of tetrapyrrole molecules like heme and chlorophyll. Does not use oxygen or artificial electron acceptors such as menadione or benzoquinone. This chain is Protoporphyrinogen IX oxidase, found in Cereibacter sphaeroides (strain ATCC 17023 / DSM 158 / JCM 6121 / CCUG 31486 / LMG 2827 / NBRC 12203 / NCIMB 8253 / ATH 2.4.1.) (Rhodobacter sphaeroides).